The following is a 365-amino-acid chain: Endophilin-B1 (365 aa).

The residue at position 1 (Met-1) is an N-acetylmethionine. Positions 1–30 (MNIMDFNVKKLAADAGTFLSRAVQFTEEKL) are membrane-binding amphipathic helix. The required for membrane binding stretch occupies residues 1–37 (MNIMDFNVKKLAADAGTFLSRAVQFTEEKLGQAEKTE). Residues 27–261 (EEKLGQAEKT…LGSFPSNYHS (235 aa)) enclose the BAR domain. Thr-145 carries the phosphothreonine; by CDK5 modification. The stretch at 155-195 (YKTIAKERKLLQNKRLDLDAAKTRLKKAKAAETRASSEQEL) forms a coiled coil. An SH3 domain is found at 305–365 (GGSRRARVLY…VPITYLELLN (61 aa)).

The protein belongs to the endophilin family. As to quaternary structure, homodimer, and heterodimer with SH3GLB2. Binds BAX; induction of apoptosis augments BAX binding. Binds DNM1, HTT, AMPH, BIN1 and ARFGAP1. Interacts with UVRAG; UVRAG bridges the interaction to BECN1 indicative for an association with the PI3K complex II (PI3KC3-C2). Post-translationally, phosphorylated at Thr-145 by CDK5; this phosphorylation is required for autophagy induction in starved neurons and facilitates homodimerization.

It localises to the cytoplasm. The protein localises to the golgi apparatus membrane. It is found in the mitochondrion outer membrane. Its subcellular location is the cytoplasmic vesicle. The protein resides in the autophagosome membrane. It localises to the midbody. Functionally, may be required for normal outer mitochondrial membrane dynamics. Required for coatomer-mediated retrograde transport in certain cells. May recruit other proteins to membranes with high curvature. May promote membrane fusion. Involved in activation of caspase-dependent apoptosis by promoting BAX/BAK1 activation. Involved in caspase-independent apoptosis during nutrition starvation and involved in the regulation of autophagy. Activates lipid kinase activity of PIK3C3 during autophagy probably by associating with the PI3K complex II (PI3KC3-C2). Associated with PI3KC3-C2 during autophagy may regulate the trafficking of ATG9A from the Golgi complex to the peripheral cytoplasm for the formation of autophagosomes by inducing Golgi membrane tubulation and fragmentation. Involved in regulation of degradative endocytic trafficking and cytokinesis, probably in the context of PI3KC3-C2. This is Endophilin-B1 (SH3GLB1) from Bos taurus (Bovine).